Consider the following 607-residue polypeptide: CRISPR-associated DNA-binding protein Cas12m (607 aa).

Residues 1 to 16 (MTRVTVQTAGVHYKWQ) form a wedge domain (WED-N) region. The recognition domain (REC) stretch occupies residues 17 to 189 (MPDQLTQQLR…QLRHHRWDGT (173 aa)). Residues 50-124 (WSSYPAVAAL…IASVRDEATE (75 aa)) form a roof in REC region. Residues 74-83 (ASTVKEEKSR) show a composition bias toward basic and acidic residues. A disordered region spans residues 74 to 94 (ASTVKEEKSRQRTKRPSHPAV). Residues 190–315 (GTISVQLQRQ…KIPDQGEVDE (126 aa)) form a wedge domain (WED-C) region. Positions 316–559 (GPTIAVHLGW…TVSHTGLSRV (244 aa)) are ruvC-I. The segment at 391–452 (SIRDTLVAWL…EGADIAETLE (62 aa)) is ruvC insertion. The target nucleic-acid binding (TNB) stretch occupies residues 552–588 (SHTGLSRVHAACGHENPADDRYLMQPVLCDGCGRTYD). Zn(2+) contacts are provided by histidine 560, cysteine 563, cysteine 580, and cysteine 583. A ruvC-II region spans residues 589–607 (TDLSATILMLQRASAATSN). Residue aspartate 590 coordinates Mg(2+).

Belongs to the CRISPR-associated DNA-binding protein Cas12m family. Binds crRNA and target dsDNA as a monomer. The cofactor is Mg(2+). Requires Zn(2+) as cofactor.

Functionally, CRISPR (clustered regularly interspaced short palindromic repeat), is an adaptive immune system that provides protection against mobile genetic elements (viruses, transposable elements and conjugative plasmids). CRISPR clusters contain sequences complementary to antecedent mobile elements and target invading nucleic acids. CRISPR clusters are transcribed and processed into CRISPR RNA (crRNA). Recognizes a short motif in the CRISPR repeat sequences (the 5' PAM or protospacer adjacent motif, 5'-TTN-3' in this organism) to help distinguish self versus nonself, as targets within the bacterial CRISPR locus do not have PAMs. Upon expression in E.coli as a CRISPR locus inhibits plasmid propagation when targeted to regions essential for plasmid propagation (replication origin and a selectable marker); inhibits expression of a non-selectable marker, probably at the transcriptional level. Protects E.coli against bacteriophage M13mp18, to a lesser extent against lambda and VpaE1 as well as phage T4 with hydroxymethyl or unmodified (but not glycosylated) cytosines. Preferentially binds to its associated crRNA. Cas12m-crRNA binds DNA in a PAM-dependent, crRNA-guided fashion. Binds a 20-bp crRNA-ss-target DNA heteroduplex, in a 52 nucleotide crRNA. No dsDNA, ssDNA or RNA nuclease activity is seen for the crRNA-Cas12m complex. Probably required for pre-crRNA processing to mature crRNA. The polypeptide is CRISPR-associated DNA-binding protein Cas12m (Gordonia otitidis (strain DSM 44809 / CCUG 52243 / JCM 12355 / NBRC 100426 / IFM 10032)).